The following is a 209-amino-acid chain: Probable septum site-determining protein MinC (209 aa).

This sequence belongs to the MinC family. In terms of assembly, interacts with MinD and FtsZ.

Functionally, cell division inhibitor that blocks the formation of polar Z ring septums. Rapidly oscillates between the poles of the cell to destabilize FtsZ filaments that have formed before they mature into polar Z rings. Prevents FtsZ polymerization. In Clostridium kluyveri (strain NBRC 12016), this protein is Probable septum site-determining protein MinC.